Consider the following 295-residue polypeptide: Signal-transducing adaptor protein 1 (295 aa).

One can recognise a PH domain in the interval 25 to 121 (PLYFEGFLLI…WRGFILTVTE (97 aa)). The residue at position 168 (Tyr168) is a Phosphotyrosine. Residues 177 to 280 (ACFYTVSRKE…TDENTGQEPS (104 aa)) form the SH2 domain. A disordered region spans residues 270 to 295 (STDENTGQEPSMEGRSEKLKKNPHIA).

In terms of assembly, interacts with KIT and CSF1R. Interacts with URI1; the interaction is phosphorylation-dependent and occurs in a growth-dependent manner. Post-translationally, phosphorylated on tyrosine by TEC. Phosphorylated on tyrosine by KIT.

The protein localises to the nucleus. The protein resides in the cytoplasm. Its subcellular location is the mitochondrion. Functionally, in BCR signaling, appears to function as a docking protein acting downstream of TEC and participates in a positive feedback loop by increasing the activity of TEC. The chain is Signal-transducing adaptor protein 1 (STAP1) from Homo sapiens (Human).